A 334-amino-acid chain; its full sequence is MAQYDQLEDKDSLDIHDNPPAPENVVKEDDNTVYFVYDEEVEEEEAPPPPTPEPIVQVNDKPHKFKDHYCKKPKFCDVCARMIVLNNKFALRCKNCKTNIHHSCQSYVQFQRCFGKIPPGFRRAYSSPLYDQEINNPGQQNRTDPVFDTLRVGVIMANKERKKGSEDKKNMMMMMMEEEEAQQPKEDEEGAEGKQDGDKKDKTATDDKNKKQQQTFSQSHYYMALYRFKAIEKDDLDFHPGDRITVLDDSNEEWWRGKIGEKTGYLPMTYIIRVRAGERVYKVTRSFVGNREMGQITLKKDQIVVKKGEEVNGYLKVSTGRKLGFFPADLLHEL.

Residues 1-26 (MAQYDQLEDKDSLDIHDNPPAPENVV) form a disordered region. Residues 7-17 (LEDKDSLDIHD) are compositionally biased toward basic and acidic residues. The segment at 62–113 (PHKFKDHYCKKPKFCDVCARMIVLNNKFALRCKNCKTNIHHSCQSYVQFQRC) adopts a Phorbol-ester/DAG-type zinc-finger fold. The span at 178–190 (EEEAQQPKEDEEG) shows a compositional bias: acidic residues. Positions 178-215 (EEEAQQPKEDEEGAEGKQDGDKKDKTATDDKNKKQQQT) are disordered. A compositionally biased stretch (basic and acidic residues) spans 191–210 (AEGKQDGDKKDKTATDDKNK). SH3 domains lie at 217 to 276 (SQSH…RVRA) and 277 to 334 (GERV…LHEL).

In terms of assembly, component of a calcium channel complex with CACNA1S. In terms of tissue distribution, expressed in muscles at the muscle triad.

The protein localises to the cytoplasm. The protein resides in the cell membrane. It localises to the sarcolemma. It is found in the T-tubule. Functionally, required for normal excitation-contraction coupling in skeletal muscle and for normal muscle contraction in response to membrane depolarization. Required for normal Ca(2+) release from the sarcplasmic reticulum, which ultimately leads to muscle contraction. Probably functions via its effects on muscle calcium channels. Increases CACNA1S channel activity, in addition to its role in enhancing the expression of CACNA1S at the cell membrane. Has a redundant role in promoting the expression of the calcium channel CACNA1S at the cell membrane. This is SH3 and cysteine-rich domain-containing protein 3 from Danio rerio (Zebrafish).